The following is a 312-amino-acid chain: tRNA dimethylallyltransferase (312 aa).

10–17 contributes to the ATP binding site; the sequence is GPTAVGKT. 12–17 is a binding site for substrate; it reads TAVGKT. The interaction with substrate tRNA stretch occupies residues 35-38; sequence DSMQ.

Belongs to the IPP transferase family. As to quaternary structure, monomer. Mg(2+) is required as a cofactor.

The enzyme catalyses adenosine(37) in tRNA + dimethylallyl diphosphate = N(6)-dimethylallyladenosine(37) in tRNA + diphosphate. Functionally, catalyzes the transfer of a dimethylallyl group onto the adenine at position 37 in tRNAs that read codons beginning with uridine, leading to the formation of N6-(dimethylallyl)adenosine (i(6)A). In Alkaliphilus metalliredigens (strain QYMF), this protein is tRNA dimethylallyltransferase.